The chain runs to 25 residues: Alanine racemase (25 aa).

Belongs to the alanine racemase family. In terms of assembly, homodimer. It depends on pyridoxal 5'-phosphate as a cofactor.

The enzyme catalyses L-alanine = D-alanine. Its pathway is amino-acid biosynthesis; D-alanine biosynthesis; D-alanine from L-alanine: step 1/1. Its function is as follows. Catalyzes the interconversion of L-alanine and D-alanine. The polypeptide is Alanine racemase (Pseudomonas fluorescens).